Reading from the N-terminus, the 177-residue chain is Co-chaperone protein HscB homolog (177 aa).

Residues 8–80 (DYFSLFGMPR…LSRAQYLLEL (73 aa)) enclose the J domain.

The protein belongs to the HscB family. In terms of assembly, interacts with HscA and stimulates its ATPase activity.

Co-chaperone involved in the maturation of iron-sulfur cluster-containing proteins. Seems to help targeting proteins to be folded toward HscA. The sequence is that of Co-chaperone protein HscB homolog from Azoarcus sp. (strain BH72).